We begin with the raw amino-acid sequence, 404 residues long: LL-diaminopimelate aminotransferase (404 aa).

Substrate contacts are provided by tyrosine 15 and glycine 42. Pyridoxal 5'-phosphate contacts are provided by residues tyrosine 72, 108–109 (AK), tyrosine 132, asparagine 188, tyrosine 219, and 247–249 (SFS). Residues lysine 109, tyrosine 132, and asparagine 188 each contribute to the substrate site. An N6-(pyridoxal phosphate)lysine modification is found at lysine 250. Pyridoxal 5'-phosphate is bound by residues arginine 258 and asparagine 288. Residues asparagine 288 and arginine 384 each coordinate substrate.

This sequence belongs to the class-I pyridoxal-phosphate-dependent aminotransferase family. LL-diaminopimelate aminotransferase subfamily. As to quaternary structure, homodimer. Pyridoxal 5'-phosphate serves as cofactor.

The catalysed reaction is (2S,6S)-2,6-diaminopimelate + 2-oxoglutarate = (S)-2,3,4,5-tetrahydrodipicolinate + L-glutamate + H2O + H(+). It functions in the pathway amino-acid biosynthesis; L-lysine biosynthesis via DAP pathway; LL-2,6-diaminopimelate from (S)-tetrahydrodipicolinate (aminotransferase route): step 1/1. Its function is as follows. Involved in the synthesis of meso-diaminopimelate (m-DAP or DL-DAP), required for both lysine and peptidoglycan biosynthesis. Catalyzes the direct conversion of tetrahydrodipicolinate to LL-diaminopimelate. This chain is LL-diaminopimelate aminotransferase, found in Lachnospira eligens (strain ATCC 27750 / DSM 3376 / VPI C15-48 / C15-B4) (Eubacterium eligens).